The primary structure comprises 137 residues: Small ribosomal subunit protein uS12 (137 aa).

Disordered stretches follow at residues 1–22 (MPTI…SKSP) and 37–57 (KNPS…TPKK). Residues 9-19 (RKGRKSHKGKS) are compositionally biased toward basic residues. Asp-102 carries the 3-methylthioaspartic acid modification.

This sequence belongs to the universal ribosomal protein uS12 family. Part of the 30S ribosomal subunit. Contacts proteins S8 and S17. May interact with IF1 in the 30S initiation complex.

Its function is as follows. With S4 and S5 plays an important role in translational accuracy. Functionally, interacts with and stabilizes bases of the 16S rRNA that are involved in tRNA selection in the A site and with the mRNA backbone. Located at the interface of the 30S and 50S subunits, it traverses the body of the 30S subunit contacting proteins on the other side and probably holding the rRNA structure together. The combined cluster of proteins S8, S12 and S17 appears to hold together the shoulder and platform of the 30S subunit. This chain is Small ribosomal subunit protein uS12, found in Limosilactobacillus fermentum (strain NBRC 3956 / LMG 18251) (Lactobacillus fermentum).